Here is a 923-residue protein sequence, read N- to C-terminus: Progesterone receptor (923 aa).

A compositionally biased stretch (basic and acidic residues) spans 1 to 11; it reads MTELQAKDPRT. The segment at 1 to 49 is disordered; that stretch reads MTELQAKDPRTLHTSGAAPSPTHVGSPLLARLDPDPFQGSQHSDASSVV. Residues 1–164 form an AF3; mediates transcriptional activation (in isoform B) region; sequence MTELQAKDPR…PATKGLLSPL (164 aa). The modulating, Pro-Rich stretch occupies residues 1 to 556; that stretch reads MTELQAKDPR…YGFDSLPQKI (556 aa). Residue K7 forms a Glycyl lysine isopeptide (Lys-Gly) (interchain with G-Cter in SUMO) linkage. S20 bears the Phosphoserine mark. Positions 38 to 49 are enriched in polar residues; it reads QGSQHSDASSVV. Residues 56 to 60 carry the LXXL motif 1 motif; the sequence is LDRLL. Residues 67–111 are disordered; it reads AQELPDEKTQNQQSLSDVEGAFSGVEASRRRSRNPRAPEKDSRLL. The residue at position 82 (S82) is a Phosphoserine. An LXXL motif 2 motif is present at residues 115–119; the sequence is LDTLL. S130 and S162 each carry phosphoserine. Positions 152 to 239 are disordered; sequence RSVPATKGLL…EGSAGPLLKS (88 aa). Residues 165-304 form a mediates transcriptional transrepression (in isoform A) region; the sequence is MSRPESKAGD…LATTVVDFIH (140 aa). The Nuclear localization signal motif lies at 184–188; the sequence is VLPKA. Phosphoserine is present on residues S190 and S213. S293 is modified (phosphoserine; by MAPK1). Positions 333 to 371 are disordered; it reads AAQVPFAPPRGSPSAPSPPVPCGDFPDCTYPPEGDPKED. The span at 338 to 353 shows a compositional bias: pro residues; that stretch reads FAPPRGSPSAPSPPVP. A Phosphoserine; by MAPK modification is found at S344. A Glycyl lysine isopeptide (Lys-Gly) (interchain with G-Cter in SUMO); alternate cross-link involves residue K387. K387 participates in a covalent cross-link: Glycyl lysine isopeptide (Lys-Gly) (interchain with G-Cter in ubiquitin); alternate. Phosphoserine; by CDK2 is present on S399. The interval 412-435 is disordered; sequence TFPDFPLPPRPPRAPPSRPGEAAV. Pro residues predominate over residues 416–429; the sequence is FPLPPRPPRAPPSR. The AF1; mediates transcriptional activation stretch occupies residues 450 to 536; it reads SALECILYKA…VYPPYLNYLR (87 aa). Residue K521 forms a Glycyl lysine isopeptide (Lys-Gly) (interchain with G-Cter in SUMO) linkage. NR C4-type zinc fingers lie at residues 557-577 and 593-617; these read CLIC…CGSC and CAGR…LRKC. Positions 557–629 form a DNA-binding region, nuclear receptor; sequence CLICGDEASG…AGMVLGGRKF (73 aa). A Phosphoserine modification is found at S666. Residues 669-903 enclose the NR LBD domain; the sequence is QEIQLVPPLI…EFPEMMSEVI (235 aa). An AF2; mediates transcriptional activation region spans residues 677–923; sequence LINLLMSIEP…MVKPLLFHKK (247 aa). Progesterone is bound at residue R756.

Belongs to the nuclear hormone receptor family. NR3 subfamily. Interacts with SMARD1 and UNC45A. Interacts with CUEDC2; the interaction promotes ubiquitination, decreases sumoylation, and represses transcriptional activity. Interacts with PIAS3; the interaction promotes sumoylation of PR in a hormone-dependent manner, inhibits DNA-binding, and alters nuclear export. Interacts with SP1; the interaction requires ligand-induced phosphorylation on Ser-344. Interacts with PRMT2. Isoform A interacts with NCOR2. Isoform B (but not isoform A) interacts with NCOA2 and NCOA1. Isoform B (but not isoform A) interacts with KLF9. Interacts with GTF2B. Post-translationally, phosphorylated on multiple serine sites. Several of these sites are hormone-dependent. Phosphorylation on Ser-293 is highly hormone-dependent and modulates ubiquitination and sumoylation on Lys-387. Phosphorylation on Ser-344 also requires induction by hormone. Basal phosphorylation on Ser-82, Ser-190 and Ser-399 is increased in response to progesterone and can be phosphorylated in vitro by the CDK2-A1 complex. Increased levels of phosphorylation on Ser-399 also in the presence of EGF, heregulin, IGF, PMA and FBS. Phosphorylation at this site by CDK2 is ligand-independent, and increases nuclear translocation and transcriptional activity. Phosphorylation at Ser-293, but not at Ser-190, is impaired during the G(2)/M phase of the cell cycle. Phosphorylation on Ser-344 by ERK1/2 MAPK is required for interaction with SP1. Sumoylation is hormone-dependent and represses transcriptional activity. Sumoylation on all three sites is enhanced by PIAS3. Desumoylated by SENP1. Sumoylation on Lys-387, the main site of sumoylation, is repressed by ubiquitination on the same site, and modulated by phosphorylation at Ser-293. In terms of processing, ubiquitination is hormone-dependent and represses sumoylation on the same site. Promoted by MAPK-mediated phosphorylation on Ser-293. Ubiquitinated by UBR5, leading to its degradation: UBR5 specifically recognizes and binds ligand-bound PGR when it is not associated with coactivators (NCOAs). In presence of NCOAs, the UBR5-degron is not accessible, preventing its ubiquitination and degradation. Post-translationally, palmitoylated by ZDHHC7 and ZDHHC21. Palmitoylation is required for plasma membrane targeting and for rapid intracellular signaling via ERK and AKT kinases and cAMP generation. In terms of tissue distribution, isoform A and isoform B are expressed in the pituitary.

Its subcellular location is the nucleus. It localises to the cytoplasm. The steroid hormones and their receptors are involved in the regulation of eukaryotic gene expression and affect cellular proliferation and differentiation in target tissues. Depending on the isoform, progesterone receptor functions as a transcriptional activator or repressor. Functionally, ligand-dependent transdominant repressor of steroid hormone receptor transcriptional activity including repression of its isoform B, MR and ER. Transrepressional activity may involve recruitment of corepressor NCOR2. Its function is as follows. Transcriptional activator of several progesteron-dependent promoters in a variety of cell types. Involved in activation of SRC-dependent MAPK signaling on hormone stimulation. The protein is Progesterone receptor (Pgr) of Rattus norvegicus (Rat).